The primary structure comprises 466 residues: Zinc finger and SCAN domain-containing protein 26 (466 aa).

K21 is covalently cross-linked (Glycyl lysine isopeptide (Lys-Gly) (interchain with G-Cter in SUMO2)). The SCAN box domain maps to 42–124 (CKQFRQLRYE…GILEDLQLDR (83 aa)). 2 stretches are compositionally biased toward basic and acidic residues: residues 124–135 (RGKAGEQKDSAQ) and 163–173 (KPEERGKETRS). The segment at 124-182 (RGKAGEQKDSAQRSRPTVLVGEPAPRREAREQPGCALPQKPEERGKETRSENGNLIAGT) is disordered. A C2H2-type 1; degenerate zinc finger spans residues 220 to 242 (SQCLETKERLVQNSGLIEHDRAH). 7 C2H2-type zinc fingers span residues 270–292 (HPCQ…QKIH), 298–320 (YQCK…LRIH), 326–348 (YLCI…QKIH), 354–376 (RECK…QRVH), 382–404 (HHCN…HRIH), 410–432 (FKCN…VRIH), and 438–460 (YKCS…QRHH).

The protein resides in the nucleus. May be involved in transcriptional regulation. In Mus musculus (Mouse), this protein is Zinc finger and SCAN domain-containing protein 26 (Zscan26).